The sequence spans 234 residues: Ribonuclease HII (234 aa).

The RNase H type-2 domain maps to 30 to 221 (GPVAGVDEAG…VRNAAMGSSL (192 aa)). Positions 36, 37, and 130 each coordinate a divalent metal cation.

The protein belongs to the RNase HII family. Requires Mn(2+) as cofactor. It depends on Mg(2+) as a cofactor.

The protein resides in the cytoplasm. It carries out the reaction Endonucleolytic cleavage to 5'-phosphomonoester.. Functionally, endonuclease that specifically degrades the RNA of RNA-DNA hybrids. The chain is Ribonuclease HII from Mycobacteroides abscessus (strain ATCC 19977 / DSM 44196 / CCUG 20993 / CIP 104536 / JCM 13569 / NCTC 13031 / TMC 1543 / L948) (Mycobacterium abscessus).